We begin with the raw amino-acid sequence, 119 residues long: Large ribosomal subunit protein uL18 (119 aa).

It belongs to the universal ribosomal protein uL18 family. As to quaternary structure, part of the 50S ribosomal subunit; part of the 5S rRNA/L5/L18/L25 subcomplex. Contacts the 5S and 23S rRNAs.

This is one of the proteins that bind and probably mediate the attachment of the 5S RNA into the large ribosomal subunit, where it forms part of the central protuberance. This chain is Large ribosomal subunit protein uL18, found in Clostridium tetani (strain Massachusetts / E88).